The sequence spans 167 residues: Putative peroxiredoxin-A (167 aa).

One can recognise a Thioredoxin domain in the interval 4–167 (IKRGDRFPTT…STAQKIIAKL (164 aa)). The active-site Cysteine sulfenic acid (-SOH) intermediate is the Cys53. Residues 165–167 (AKL) carry the Microbody targeting signal motif.

This sequence belongs to the peroxiredoxin family. Prx5 subfamily.

It localises to the peroxisome membrane. The enzyme catalyses a hydroperoxide + [thioredoxin]-dithiol = an alcohol + [thioredoxin]-disulfide + H2O. Its function is as follows. Thiol-specific peroxidase that catalyzes the reduction of hydrogen peroxide and organic hydroperoxides to water and alcohols, respectively. Plays a role in cell protection against oxidative stress by detoxifying peroxides and as sensor of hydrogen peroxide-mediated signaling events. This Candida boidinii (Yeast) protein is Putative peroxiredoxin-A (PMPA).